The sequence spans 478 residues: GDP-fucose protein O-fucosyltransferase 3 (478 aa).

Residues 1 to 9 are Cytoplasmic-facing; sequence MVRIQRGKL. A helical; Signal-anchor for type II membrane protein membrane pass occupies residues 10–30; that stretch reads LAFCLCVMATVFLLITLQVVV. Residues 31 to 478 lie on the Lumenal side of the membrane; it reads ELGKFEGKKF…QEFWALVFKD (448 aa). Asn110 and Asn168 each carry an N-linked (GlcNAc...) asparagine glycan. A disulfide bond links Cys389 and Cys392.

The protein belongs to the glycosyltransferase 10 family.

Its subcellular location is the endoplasmic reticulum membrane. It carries out the reaction L-threonyl-[protein] + GDP-beta-L-fucose = 3-O-(alpha-L-fucosyl)-L-threonyl-[protein] + GDP + H(+). The enzyme catalyses L-seryl-[protein] + GDP-beta-L-fucose = 3-O-(alpha-L-fucosyl)-L-seryl-[protein] + GDP + H(+). It participates in protein modification; protein glycosylation. Its function is as follows. Protein O-fucosyltransferase that specifically catalyzes O-fucosylation of serine or threonine residues in EMI domains of target proteins, such as MMRN1, MMRN2 and EMID1. Attaches fucose through an O-glycosidic linkage. O-fucosylation of EMI domain-containing proteins may be required for facilitating protein folding and secretion. May also show alpha-(1,3)-fucosyltransferase activity toward the innermost N-acetyl glucosamine (GlcNAc) residue in biantennary N-glycan acceptors. However, this was tested with a library of synthetic substrates and this activity is unsure in vivo. May be involved in biosynthesis of Lewis X-carrying biantennary N-glycans that regulate neuron stem cell self-renewal during brain development. The protein is GDP-fucose protein O-fucosyltransferase 3 (FUT10) of Bos taurus (Bovine).